The sequence spans 196 residues: GKGLDWFKKQWGKLKNSFKKVGAKVKAAFNKGRDFLKKKGIKVDPLNCQGSKCRSCLIFTLKPKKFCVEYAFSASAITISLTKEKDDEAKVLLGPFTIKTGNIPQCSKLGSFIGELCLQGVEGRLKSSNGKPHVNLCVGLLLKKFGCGAKICVSYVDGKFSGSFKPKLFAGDEENGTIMEAGDKEDEGKVIDAVPE.

This sequence belongs to the redulysin-like family. As to expression, expressed by the venom gland.

Its subcellular location is the secreted. In terms of biological role, probable insecticidal toxin that has been detected in a semi-pure insecticidal fraction. The protein is Venom platylysin of Platymeris biguttatus (Two-spotted assassin bug).